The following is a 353-amino-acid chain: UPF0283 membrane protein YcjF (353 aa).

Residues 1-19 (MSEPLKPRIDFAEPLKEEP) are compositionally biased toward basic and acidic residues. Residues 1 to 35 (MSEPLKPRIDFAEPLKEEPTSAFKAQQTFSEAESR) form a disordered region. 3 helical membrane-spanning segments follow: residues 70-90 (MVMGGLALFGASVVGQGVQWT), 100-120 (VALGGCAAGALIVGAGVGSVV), and 213-233 (ESTLMIAVSPLALVDMAFIAW).

This sequence belongs to the UPF0283 family.

It localises to the cell inner membrane. The protein is UPF0283 membrane protein YcjF of Salmonella paratyphi B (strain ATCC BAA-1250 / SPB7).